The primary structure comprises 314 residues: Short chain dehydrogenase atnD (314 aa).

NADP(+)-binding residues include Leu41, Lys66, Asp90, and Asn116. Catalysis depends on proton donor residues Ser171 and Tyr204. Tyr204 and Lys208 together coordinate NADP(+). The active-site Lowers pKa of active site Tyr is Lys208.

It belongs to the short-chain dehydrogenases/reductases (SDR) family.

The protein operates within secondary metabolite biosynthesis. Its function is as follows. Short chain dehydrogenase; part of the gene cluster that mediates the biosynthesis of aspercryptins, linear lipopeptides built from six amino acids including 2 highly unusual and nonproteogenic amino acids, 2-amino-octanoic acid (2aoa) and 2-amino-dodecanol (2adol). The core structure of aspercryptins is as follows: Ser/Ala-Thr-Ile/Val-2aoa-Asn-2adol. The first step of aspercryptin biosynthesis is the generation of the fatty acid precursors, octanoic and dodecanoic acids, by the FAS subunits atnF and atnM. The fatty acid precursors are likely transformed into the corresponding alpha-amino fatty acids in three steps. First, they are hydroxylated by the cytochrome P450 monooxygenase atnE, then oxidized to the corresponding alpha-keto acids by the NAD(P)-dependent oxidoreductase atnD, and finally converted to the alpha-amino fatty acids by the PLP-dependent aminotransferases atnH or atnJ. the alpha-amino fatty acids, 2-amino-octanoic and 2-amino-dodecanoic acids, are recognized, activated, and covalently tethered to the NRPS atnA by its fourth and sixth adenylation domains. The second module of atnA is the Thr module and contains an epimerase (E) domain responsible for the epimerization of Thr to D-allo-Thr. Additionally, despite atnA having only one epimerase domain, the first amino acid of aspercryptin A1 is D-Ser, suggesting that serine is either loaded directly as D-Ser on the first module or that the epimerase domain in the threonine module epimerizes both L-Ser and L-Thr. After condensation of the hexapeptide of aspercryptin, the C-terminal reductase (TE) domain might be involved in the reductive release and production of the aldehyde hexapeptide. Further reduction would generate aspercryptins. The variety of aspercryptins produced reflects the flexibility of the atnA NRPS, allowing incorporation of alanine instead of serine, valine for isoleucine, and a C10 fatty amino alcohol instead of the C12 version. AtnB seems to be involved in the selectivity for Ile versus Val by the third module. Moreover, type B, C and D aspercryptins have an additional N-terminal cichorine, acetyl and propionyl group respectively. The protein is Short chain dehydrogenase atnD of Emericella nidulans (strain FGSC A4 / ATCC 38163 / CBS 112.46 / NRRL 194 / M139) (Aspergillus nidulans).